We begin with the raw amino-acid sequence, 360 residues long: Phospho-N-acetylmuramoyl-pentapeptide-transferase (360 aa).

The next 10 helical transmembrane spans lie at 21 to 41, 74 to 94, 97 to 117, 134 to 154, 168 to 188, 199 to 219, 236 to 256, 263 to 283, 288 to 308, and 338 to 358; these read YVTFRAILGLMTALMFSLWWG, MGGILILAGVFISVLLWGDLG, YVWVVLFVLASFGLIGFIDDY, YILQSLAALVIAFYLYASADM, IMPQLGGFFIVLAYFTIVGSS, GLAIMPTVMVAAAFALIAYLS, AGELVIVCTAIVGAGLGFLWF, VFMGDVGSLSLGAALGAIAVL, ILLVIMGGVFVMETVSVILQV, and VIVRFWIISLFLVLLGLATLK.

It belongs to the glycosyltransferase 4 family. MraY subfamily. The cofactor is Mg(2+).

Its subcellular location is the cell inner membrane. The catalysed reaction is UDP-N-acetyl-alpha-D-muramoyl-L-alanyl-gamma-D-glutamyl-meso-2,6-diaminopimeloyl-D-alanyl-D-alanine + di-trans,octa-cis-undecaprenyl phosphate = di-trans,octa-cis-undecaprenyl diphospho-N-acetyl-alpha-D-muramoyl-L-alanyl-D-glutamyl-meso-2,6-diaminopimeloyl-D-alanyl-D-alanine + UMP. It participates in cell wall biogenesis; peptidoglycan biosynthesis. Its function is as follows. Catalyzes the initial step of the lipid cycle reactions in the biosynthesis of the cell wall peptidoglycan: transfers peptidoglycan precursor phospho-MurNAc-pentapeptide from UDP-MurNAc-pentapeptide onto the lipid carrier undecaprenyl phosphate, yielding undecaprenyl-pyrophosphoryl-MurNAc-pentapeptide, known as lipid I. The polypeptide is Phospho-N-acetylmuramoyl-pentapeptide-transferase (Shewanella woodyi (strain ATCC 51908 / MS32)).